A 425-amino-acid polypeptide reads, in one-letter code: Voltage-dependent calcium channel gamma-8 subunit (425 aa).

The next 4 helical transmembrane spans lie at 19-39 (VQVL…TIAI), 129-149 (SIFP…VAAS), 158-178 (IILG…IGVI), and 208-228 (FGGL…NIYI). Residues Ser-252 and Ser-255 each carry the phosphoserine modification. The tract at residues 272-304 (RRSRSSSRSSEPSPSRDASPGGPGGPGFASTDI) is disordered. Positions 277 to 287 (SSRSSEPSPSR) are enriched in low complexity. Residues 318 to 338 (VAAGLAGAGGGGGGAVGAFGG) form a helical membrane-spanning segment. The segment covering 343 to 354 (AGGGGGGGGGAG) has biased composition (gly residues). Disordered regions lie at residues 343–365 (AGGG…ASGF) and 377–425 (GGGV…TTPV). Pro residues predominate over residues 387 to 401 (PPAPPAPAPPAPSAP). A compositionally biased stretch (polar residues) spans 412–425 (ASNTNTLNRKTTPV).

The protein belongs to the PMP-22/EMP/MP20 family. CACNG subfamily. In terms of assembly, interacts with CACNA1C. Identified in a complex with the L-type calcium channel subunits CACNA1C, CACNA2D1 and either CACNB1 or CACNB2. Acts as an auxiliary subunit for AMPA-selective glutamate receptors (AMPARs). Found in a complex with GRIA1, GRIA2, GRIA3, GRIA4, CNIH2, CNIH3, CACNG2, CACNG3, CACNG4, CACNG5 and CACNG7. Interacts with CNIH2. Found in a complex with GRIA1, GRIA2, GRIA3, GRIA4, DLG4 and CNIH2. Post-translationally, palmitoylated. Probably palmitoylated by ZDHHC3 and ZDHHC7. Detected in heart left ventricle.

The protein localises to the cell membrane. Its subcellular location is the postsynaptic density membrane. Its function is as follows. Regulates the activity of L-type calcium channels that contain CACNA1C as pore-forming subunit. Regulates the trafficking and gating properties of AMPA-selective glutamate receptors (AMPARs). Promotes their targeting to the cell membrane and synapses and modulates their gating properties by slowing their rates of activation, deactivation and desensitization and by mediating their resensitization. Does not show subunit-specific AMPA receptor regulation and regulates all AMPAR subunits. The protein is Voltage-dependent calcium channel gamma-8 subunit of Homo sapiens (Human).